A 345-amino-acid polypeptide reads, in one-letter code: Phosphoribosylformylglycinamidine cyclo-ligase (345 aa).

Belongs to the AIR synthase family.

Its subcellular location is the cytoplasm. The catalysed reaction is 2-formamido-N(1)-(5-O-phospho-beta-D-ribosyl)acetamidine + ATP = 5-amino-1-(5-phospho-beta-D-ribosyl)imidazole + ADP + phosphate + H(+). It functions in the pathway purine metabolism; IMP biosynthesis via de novo pathway; 5-amino-1-(5-phospho-D-ribosyl)imidazole from N(2)-formyl-N(1)-(5-phospho-D-ribosyl)glycinamide: step 2/2. The protein is Phosphoribosylformylglycinamidine cyclo-ligase of Chromobacterium violaceum (strain ATCC 12472 / DSM 30191 / JCM 1249 / CCUG 213 / NBRC 12614 / NCIMB 9131 / NCTC 9757 / MK).